The primary structure comprises 176 residues: Flavodoxin (176 aa).

Positions isoleucine 4 to lysine 172 constitute a Flavodoxin-like domain.

The protein belongs to the flavodoxin family. The cofactor is FMN.

In terms of biological role, low-potential electron donor to a number of redox enzymes. NifF is the electron donor to nitrogenase. The chain is Flavodoxin (nifF) from Klebsiella pneumoniae.